We begin with the raw amino-acid sequence, 153 residues long: MNIVTGQLNAHGKKFAIVVSRFNEFITNKLISGAEDILKRHSVADEDISVYWVPGAFEIPAVAKKIAENGKDNGVICLGCVIRGATPHFDYISAEVSKGVASIALQSNVPVIFGVLTTDSIEQAVERAGTKAGNKGSDAAMSAIEMVNLYSAI.

Residues phenylalanine 22, 56–58 (AFE), and 80–82 (CVI) each bind 5-amino-6-(D-ribitylamino)uracil. 85–86 (AT) contacts (2S)-2-hydroxy-3-oxobutyl phosphate. Histidine 88 (proton donor) is an active-site residue. Residue phenylalanine 113 participates in 5-amino-6-(D-ribitylamino)uracil binding. Residue arginine 127 participates in (2S)-2-hydroxy-3-oxobutyl phosphate binding.

The protein belongs to the DMRL synthase family.

The catalysed reaction is (2S)-2-hydroxy-3-oxobutyl phosphate + 5-amino-6-(D-ribitylamino)uracil = 6,7-dimethyl-8-(1-D-ribityl)lumazine + phosphate + 2 H2O + H(+). Its pathway is cofactor biosynthesis; riboflavin biosynthesis; riboflavin from 2-hydroxy-3-oxobutyl phosphate and 5-amino-6-(D-ribitylamino)uracil: step 1/2. Catalyzes the formation of 6,7-dimethyl-8-ribityllumazine by condensation of 5-amino-6-(D-ribitylamino)uracil with 3,4-dihydroxy-2-butanone 4-phosphate. This is the penultimate step in the biosynthesis of riboflavin. This chain is 6,7-dimethyl-8-ribityllumazine synthase, found in Endomicrobium trichonymphae.